The following is a 178-amino-acid chain: Adenine phosphoribosyltransferase (178 aa).

It belongs to the purine/pyrimidine phosphoribosyltransferase family. As to quaternary structure, homodimer.

The protein resides in the cytoplasm. The catalysed reaction is AMP + diphosphate = 5-phospho-alpha-D-ribose 1-diphosphate + adenine. It participates in purine metabolism; AMP biosynthesis via salvage pathway; AMP from adenine: step 1/1. In terms of biological role, catalyzes a salvage reaction resulting in the formation of AMP, that is energically less costly than de novo synthesis. The polypeptide is Adenine phosphoribosyltransferase (Mycoplasmoides gallisepticum (strain R(low / passage 15 / clone 2)) (Mycoplasma gallisepticum)).